Reading from the N-terminus, the 1223-residue chain is Glycerophosphocholine phosphodiesterase GDE1 (1223 aa).

The region spanning 1–213 (MKFGKTFANH…GTNQQMSTMK (213 aa)) is the SPX domain. The segment covering 43–59 (HNKNSYDEGRPPTKMRD) has biased composition (basic and acidic residues). A disordered region spans residues 43–64 (HNKNSYDEGRPPTKMRDSSNSA). ANK repeat units lie at residues 427–456 (YKRTPLHYSCQYGLSEVTKLIIKLMKEWNI), 472–502 (ESLTPLHLCVLGAHPKTTEVLLQSLDPNVKL), 504–533 (SSSLLHLATEWNNYPLLHVLLSSKRFDINY), 538–567 (LHETPLYLACRLNFFEAAVCLLYNGADLEI), 572–601 (FGWTAIFVAAAEGFTDIVKLLIANNANFDI), and 605–634 (GGWTPMEHAVLRGHLHIADMVQIRDELVTH). Phosphoserine is present on serine 653. The GP-PDE domain occupies 872–1217 (TRVIGHRGLG…DSVLAIRRGL (346 aa)). A divalent metal cation-binding residues include glutamate 911, aspartate 913, and histidine 926. Serine 983 is modified (phosphoserine).

The protein belongs to the GDE1 family. A divalent metal cation is required as a cofactor.

The protein localises to the cytoplasm. The enzyme catalyses sn-glycerol 3-phosphocholine + H2O = sn-glycerol 3-phosphate + choline + H(+). The catalysed reaction is sn-glycero-3-phospho-1D-myo-inositol + H2O = myo-inositol + sn-glycerol 3-phosphate + H(+). In terms of biological role, glycerophosphocholine glycerophosphodiesterase responsible for the hydrolysis of intracellular glycerophosphocholine into glycerol-phosphate and choline. The choline is used for phosphatidyl-choline synthesis. Required for utilization of glycerophosphocholine as phosphate source. May also use glycerophosphoinositol as substrate in vivo. In Saccharomyces cerevisiae (strain ATCC 204508 / S288c) (Baker's yeast), this protein is Glycerophosphocholine phosphodiesterase GDE1.